The chain runs to 117 residues: uncharacterized protein (117 aa).

The helical transmembrane segment at 76–96 (FIMSSGCFLIASLSCVGLTVF) threads the bilayer.

The protein resides in the membrane. This is an uncharacterized protein from Saccharomyces cerevisiae (strain ATCC 204508 / S288c) (Baker's yeast).